Here is a 431-residue protein sequence, read N- to C-terminus: Glucose-1-phosphate adenylyltransferase (431 aa).

Residues Tyr108, Gly174, 189 to 190 (EK), and Ser207 each bind alpha-D-glucose 1-phosphate.

Belongs to the bacterial/plant glucose-1-phosphate adenylyltransferase family. Homotetramer.

The enzyme catalyses alpha-D-glucose 1-phosphate + ATP + H(+) = ADP-alpha-D-glucose + diphosphate. It functions in the pathway glycan biosynthesis; glycogen biosynthesis. Its function is as follows. Involved in the biosynthesis of ADP-glucose, a building block required for the elongation reactions to produce glycogen. Catalyzes the reaction between ATP and alpha-D-glucose 1-phosphate (G1P) to produce pyrophosphate and ADP-Glc. The chain is Glucose-1-phosphate adenylyltransferase from Actinobacillus succinogenes (strain ATCC 55618 / DSM 22257 / CCUG 43843 / 130Z).